A 312-amino-acid polypeptide reads, in one-letter code: DNA-directed RNA polymerase subunit alpha (312 aa).

The tract at residues 1–226 (MIEFEKPNIT…EHLDIFVNLT (226 aa)) is alpha N-terminal domain (alpha-NTD). The alpha C-terminal domain (alpha-CTD) stretch occupies residues 243-312 (KEKMLEMTIE…DLGLGLRKED (70 aa)).

This sequence belongs to the RNA polymerase alpha chain family. In terms of assembly, homodimer. The RNAP catalytic core consists of 2 alpha, 1 beta, 1 beta' and 1 omega subunit. When a sigma factor is associated with the core the holoenzyme is formed, which can initiate transcription.

It carries out the reaction RNA(n) + a ribonucleoside 5'-triphosphate = RNA(n+1) + diphosphate. Its function is as follows. DNA-dependent RNA polymerase catalyzes the transcription of DNA into RNA using the four ribonucleoside triphosphates as substrates. The polypeptide is DNA-directed RNA polymerase subunit alpha (Lacticaseibacillus casei (strain BL23) (Lactobacillus casei)).